The primary structure comprises 4574 residues: MMCAAAAAGAGGSGILSSSSHSMGLGVRVIPGAGNDFAPIGSGMGSCPVVGARSDCRSRYQLLLSGRALAERYRRIYTTAINDKEQGLNLGRGKKALSKKKLKRRQKVKSKVKTRTKTDTLDGAFPVPDIKLHSNPSAFNVYCNVRHCVLDWQQKEAALALASRNSVQSGDSDSEEEEEYREPFVKLPKIIGIGLCGVFELIKETRFSHPSLCLRSLQALLDMLQGQQPESFQTEPPDVLESLFHLLLETTVRSTGMNDPTGQTLTALSCACLFSLVVAWGDTGKTLQAVSAILTNNGSHACQTIQVPTILNALQRSVQAVLVGKIQIQEWFGNGIKRAALMNKWVLKEVNIDDDEHCLLQTDGSFLYLLCKDGLYKVGSGYSGTVRGHVYNSTSRIRNRKEKRSWLGFAQGCLLYRDMNSHNMAAIKINPETLEQEGTITVPGLQADGQNIIFTDGEYINQIAACKDDGFVVRIYATSSDPALQQELQLKLARKCLHACGISLFDLEKDLHIISTGFDEEAALIGAGREFALMKTASGKIYYTGKYQSLGIKQGGPSSGKWVELPVTKSPKIVQFSVGHDGSHALLVAEDGSVFFTGSASKGEDGESTKSRRQPKPYKPKKMIKLETKMAVYTACNNGSSSIVTKDGELYMFGKDAIYSDSTCQVSDLKGHFVTQVAMGKAHTCVLTKSGEVWTFGVNNKGQCGRDTGAMSQAGKAFGVENMATAMDEDLEDELDEKEEKSMMCQPGMHKWKLDQCMVCTVCGDCTGYGASCVSSGRPDRVPGGICGCGSGESGCSSCGCCKACARELDGQEARQRGIFDAVKEMIPLDLLLGVNIEEHIQIRQEEKRQRINRRHRLEEGRGPLVFPGPLFMNQREQVLARLRPLQAVKLMREKLKDGSSERGDKDASKITTYPPGAVRFDCELRAVQVSCGFHHSVVLMENGDVYTFGYGQHGQLGHGDVNSRGSPTLVQALPGPSTQVTAGSNHTAVLLMDGQVFTFGSFSKGQLGRPILDMPYWNAKPSPMPNIGAKYGRKATWIGASGDQTFLRIDEALINSHVLATSEIFANKHIIGLVPTSISEPPPFKCLLINKLDGSCRTFNDSEQEDLQGFGLCLDPVYDVIWRFLPVTREMCCYNAVIADARVPTASDIQALCSILSPELALPSGSHASTTRSHGALHILGCLDTLAAMQELKMGVASAEEETQAVMKVYSKEDYSVVNRFESHGGGWGYSAHSVEAIRFCADADILLGGLGLFGGRGEYTAKIKLFELGPDGGDHETDGDLLAETDVLAYDCAAREKYAMMFDEPVLLQLGWWYVAWARVSGPSSDCGSHGQATITTDDGVVFQFKSSKKSNNGTDVNAGQIPQLLYRLPSNDGNASKGKQQTSEPVHILKRTFARTVSVDCFESLLSILHWSWTTLVLGVEELRGLKGFQFTATLLDLERLRFVGTCCLRLLRVYICDIFPISASTKAIVEESSKLAECVGKTRSLLKKILSEGMDNCLTKLDNDPQGYLSQPLTLLEAVLQECHNTFTACFHSFYPTPALQWACLCDLLNCLDQDIQEANFRTSSSRLLAAVMSALCNTSVKLTSILPIAYDGEVLLRSLVKQVSTENDSALAHRFPLLVAHMEKLSHTEENLMGMTTFREVLEKMLVIVVLPVRKSLRKEVELFSPHLVSNTCGLLASIVSELTASALGSEVDGLNSLHSVKATPNRFTKTSQGRSWNTGNGSPDAICFTVDKPGVVLVGFCVYGGGGIHEYELEVLADDAQTEHPGDSAHSHRWTSLELVKGTYCTDDSPSDIAEIRLDKAVPLKENVKYAVRLRNYGSRTANGDGGITTVQCSDGVAFTFSTCSLSSNGTNQTRGQIPQILYYRSEYDGDLQSQLLSKANEEDKNCSRALSVVSVVVRAAKDLLHRAFAVDVEDIPELLSSSSLFSMLLPLILAYIGPVAASVPKAAVEVFGLVQELLPAVSALNQKYAPPTFNPNQSTDSTTGNQPEQGLSACTTSNHYAVLESDHPYKQAGVTQYKVSFPDCVRWMTVEFDPQCGTAQPEDVLRLLIPSRSLHFSGLSSKALAHETINSWTELKKFSGSSGWPTAVLVLPGNEALFSLETASDYVKDEKASFYGFKCVAVGYEFNPGLDEGIIQLEKELAYLGSVCAAALMKKDLALPIGNELEEDLEILEEASLQVCKSHSGLLGKGLALSHSPTILEALEGNLPLHLQTNEHSFLEDFITCVQSSSGGRLARWLQPDSYADPQKTSLILNKDDIRCGWPTTVVVQTKDQYGDVVHVPNMKVEVKAVPVSQKKSIQQENMKKLQRLPGTSSNSATGTDLTFGGHPAPKLEATYEPMIIKEARYIAITMMKAYENYSFEELRFASPTPKRPSENMLIRANTDGTYSANWTPGAVGLYTIHVTIDGIEIDAGLEVEVKDPPKGMIPPGTQMVKPKAEPQPSKVRKFVAKDSAGLRVRSHPSLQSEQIGIVQVNGTITFIDEIHNDDGVWLRLNDETVKKYVPNMNGYTEAWCLSFNQHLGRSLLVPVDVINSEGTWVQLDKNSVVEFCESDEGEAWSLARDRGGNQYLRHVEEQAVLEHGAQTPPPSPFSVQAFNRGMASSGAQGFDYGISNNKGDRDNMASWSVSPGSKHRQESRSSKTDSHSNRSVDQVKSKNNESLSASEALILKSDTGKLRSDSHSRSHSPNHNTLQALKADGRTSGLRAESPNPGSRSSSPKQKTFTSGRSSPSSTSSPRSSSPHDKNLPAKVSPSKVHLDPPRERSKSDSYTLDPDTLRKKKVPLMEPLRGRSTSPKPKLPPKESKGGSSNAENRAPSPHVVQENLHSEVVEVCRSSALLSNDEGNDENSELHNAEEGSSKVHFSIGKAPVKEELESRSSPKVSRKTSSRHVRPKKDKSGPLFKGENVRPTEPAKQAMSPSVAECARAVFAAFLWHEGIVHDAMACSSFLKFNPELTKEHAPIRNSLSCQQGFDEKESKLKNRHSLEISSALNMFNISPHGPDISKMGSINKNKVLSMLKEPPLPEKCEDGKESVSYEMTSHSSMRSKSILPLTLQHLVAFWEDISMATIKAATQNMIFPSPGSSAILKKKENEKDSKKTKKEKKKKEKAEVRPRGNLFGEMAQLAMGGPEKDTICELCGESHPYPVTYHMRQAHPGCGRYAGGQGYNSIGHFCGGWAGNCGDGGIGGSTWYLVCDRCREKYLREKQTAAREKVKQSRKKPLQVKTPRALPTMEAHQVIRANALFLLSLSSAAEPSLLCHHPPKPFHSHLPSLKEGVSEELPNKMGCLYLQTLARQHTENFGVYQDDNLFQDEMRYLRSTSVPAPYISVTPDACPNVFEEPGSNMKSMPPSLETSPITDSDTAKRTVFQRSYSVVASEYDKQHSASPARVKAVPRRRVHSGDAEVGSSLLRHPSPELSRLISAHGSLSKGERNFQWPVLAFVIQHHDLEGLEVAMKHALRKSACRVFAMEAFNWLLCNVTQTTSLHDILWHFVASLTPSPFETEEEEDEENKGNKENLEQEKDLGVCEHPLSDIIIAGEAAHPLPHTFHCLLQTISDLMMSLPSGSSLQQMALRCWSLKFKQSDHQFLHQSNVFHHINNILSKSDDGDSEESFNISVQSGYEAISQELCVVTCLKDLTSVVDIKTSSRPAMIGSLTDGSTETFWESGDEDKNKTKSITISCVKGINASYVSVHVDNSRDIGNKVTSMIFLCGKAVEDLCRIKQIDLDSRHMGWVTSELPGGDHHVIKIELKGPENTLRVRQVKVLGWKEGESIKIAGQISASVAQQKNCEAETLRVFRLITSQVFGKLICGDAEPTPEQEEKNLLSSPEGEDKAPSDADLKEHMVGIIFSRSKLTNLQKQVCAHIVQAIRMEATRVREEWEHAISSKENANSQPSDDDASSDAYCFELLSMVLALSGSNVGRQYLAQQLTLLQDLFSLLHTASPRVQRQVTSLLRRVLPEVTPMRLASVIGVKALPPADISDIIHSTEKGDWTKLGILDMFLGCIAKALTVQLKAKGTTIVGTAGMAAGKGVTTVTLPMIFNSSYIRRGESHWWMKGSTPPQIAEIIIKLVKDMAAGHLSDAWSRVTKNAIAETIIALTKMEEEHRSPVRCIATTRLWLALASLCVLDQDHVDRLSSGRWMGKDGQQKQMPMCDNHDDGETAAIILCNACGNLCTDCDRFLHLHRRTRTHQRQVFKEEEEAIKVDLHEGCGRTKLFWLMALADSKTMKAMVEFREHTGKPASSSSDACRFCGTRHGTELSAVGSVCSDQDCQEYAKLACSKTHPCGHPCGGVKNEDLCLPCLHGCDKTATCLKQDADDMCMICFTEALSAAPAIQLDCSHVFHLQCTRRVLENRWLGPRITFGFMSCPICKNKINHLVLKDLLDPIKELYEDVRRKALMRLEYEGLHKSEAITMSGARFFNNPAGFAMNRYAYYVCFKCKKAYFGGEARCDAEAGQGDDYDPRELICGACSDVSRAQMCSKHGTDFLEYKCRYCCSVAVFFCFGTTHFCNACHDDFQRMTSVPKEELPHCPAGPKGKQLEGSECPLHVVHPPTGEEFALGCGVCRNAHTF.

2 disordered regions span residues 92 to 115 (RGKK…VKTR) and 599 to 620 (SASK…PYKP). 4 RCC1 repeats span residues 591–646 (DGSV…IVTK), 690–746 (SGEV…MMCQ), 943–993 (NGDV…VLLM), and 995–1051 (GQVF…LRID). Over residues 611-620 (SRRQPKPYKP) the composition is skewed to basic residues. Residues Cys1733 and Cys1850 are joined by a disulfide bond. 2 disordered regions span residues 1976 to 1998 (APPT…EQGL) and 2313 to 2332 (LQRL…LTFG). Polar residues-rich tracts occupy residues 1981-1998 (NPNQ…EQGL) and 2317-2328 (PGTSSNSATGTD). One copy of the Filamin repeat lies at 2336-2417 (APKLEATYEP…IHVTIDGIEI (82 aa)). 5 disordered regions span residues 2613 to 2824 (GFDY…PSPH), 2845 to 2922 (SNDE…KQAM), 3085 to 3116 (SPGS…KAEV), 3345 to 3365 (PGSN…TDSD), and 3505 to 3526 (FETE…EQEK). 2 stretches are compositionally biased toward basic and acidic residues: residues 2639–2663 (HRQE…KSKN) and 2678–2688 (DTGKLRSDSHS). Residues 2716-2729 (NPGSRSSSPKQKTF) are compositionally biased toward polar residues. The span at 2730 to 2745 (TSGRSSPSSTSSPRSS) shows a compositional bias: low complexity. Basic and acidic residues-rich tracts occupy residues 2761 to 2772 (VHLDPPRERSKS), 2854 to 2864 (SELHNAEEGSS), and 2874 to 2883 (PVKEELESRS). Composition is skewed to basic residues over residues 2887 to 2900 (VSRK…RPKK) and 3102 to 3111 (KKTKKEKKKK). The segment covering 3515–3526 (NKGNKENLEQEK) has biased composition (basic and acidic residues). In terms of domain architecture, DOC spans 3617–3795 (FNISVQSGYE…SVAQQKNCEA (179 aa)). Positions 3815–3841 (GDAEPTPEQEEKNLLSSPEGEDKAPSD) are disordered. Cys4324, Cys4327, Cys4342, His4344, His4347, Cys4350, Cys4371, Cys4374, Cys4440, and Cys4443 together coordinate Zn(2+). The RING-type; atypical zinc-finger motif lies at 4324–4375 (CMICFTEALSAAPAIQLDCSHVFHLQCTRRVLENRWLGPRITFGFMSCPICK). The segment at 4435–4572 (YAYYVCFKCK…LGCGVCRNAH (138 aa)) is tandem cysteine domain. Residue Cys4454 is part of the active site. Zn(2+)-binding residues include Cys4471, Cys4474, Cys4483, His4486, Cys4495, Cys4498, and Cys4499. The active site involves Cys4506. Positions 4513, 4516, 4534, 4548, 4554, 4565, and 4568 each coordinate Zn(2+).

Belongs to the RING-Cys relay (RCR) family. Widely expressed when the visual system begins developing. In the eye, expressed in all cells, including retinal ganglion cells, with no obvious gradient.

The protein resides in the nucleus. It localises to the cell projection. Its subcellular location is the axon. The protein localises to the cytoplasm. It is found in the cytoskeleton. It catalyses the reaction [E2 ubiquitin-conjugating enzyme]-S-ubiquitinyl-L-cysteine + [acceptor protein]-L-threonine = [E2 ubiquitin-conjugating enzyme]-L-cysteine + [acceptor protein]-3-O-ubiquitinyl-L-threonine.. It participates in protein modification; protein ubiquitination. Its function is as follows. Atypical E3 ubiquitin-protein ligase which specifically mediates ubiquitination of threonine and serine residues on target proteins, instead of ubiquitinating lysine residues. Shows esterification activity towards both threonine and serine, with a preference for threonine, and acts via two essential catalytic cysteine residues that relay ubiquitin to its substrate via thioester intermediates. Interacts with the E2 enzymes UBE2D1, UBE2D3, UBE2E1 and UBE2L3. Plays a key role in neural development, probably by mediating ubiquitination of threonine residues on target proteins. Involved in different processes such as regulation of neurite outgrowth, synaptic growth, synaptogenesis and axon degeneration. Required in the visual system for correct fasciculation, targeting and mapping of retinal axons. Acts as a regulator of pteridine synthesis. May play a role in the regulation of the circadian clock gene expression. The chain is E3 ubiquitin-protein ligase MYCBP2 from Danio rerio (Zebrafish).